The following is a 227-amino-acid chain: MVPPLALDIDGTLTTASGRLDARVFELLPDWDAPVVLATGKAFPYPVALAHFLGRAETVIAENGGVVHVDGETAILGDAEAPRAVVEAFRERGGDPGWGARDTVNRWRETEVALSLDADEALLREVAAAAGGDVEVVDTGYAYHVKSTGVSKGRGLERVGDALGIGPDEFVAIGDSENDVSTFAVAGESYAVANADGAAREAADIVVADSYMDGTAGVLADLRTRTE.

Residue D8 is the Nucleophile of the active site. Residues D8 and D10 each contribute to the Mg(2+) site. Position 152 (K152) interacts with substrate. D175 and D179 together coordinate Mg(2+).

This sequence belongs to the archaeal SPP-like hydrolase family. The cofactor is Mg(2+).

The enzyme catalyses 2-phosphoglycolate + H2O = glycolate + phosphate. Its function is as follows. Catalyzes the dephosphorylation of 2-phosphoglycolate. The sequence is that of Phosphoglycolate phosphatase from Halorubrum lacusprofundi (strain ATCC 49239 / DSM 5036 / JCM 8891 / ACAM 34).